Reading from the N-terminus, the 187-residue chain is Troponin I, slow skeletal muscle (187 aa).

N-acetylproline is present on Pro2. An involved in binding TNC region spans residues 2–48 (PEVERKPKITASRKLLLKSLMLAKAKECWEQEHEEREAEKVRYLAER). Ser58 carries the post-translational modification Phosphoserine. The interval 97–118 (LKLKVMDLRGKFKRPPLRRVRV) is involved in binding TNC and actin.

It belongs to the troponin I family. In terms of assembly, binds to actin and tropomyosin. As to expression, highest levels observed in human skeletal muscle (e.g. gastrocnemious muscle), differentiated cultures of primary human muscle cells and rhabdomyosarcoma cells cultured in low serum medium. Expressed in C2 muscle cell myoblasts and myotubes.

In terms of biological role, troponin I is the inhibitory subunit of troponin, the thin filament regulatory complex which confers calcium-sensitivity to striated muscle actomyosin ATPase activity. The chain is Troponin I, slow skeletal muscle (TNNI1) from Homo sapiens (Human).